The primary structure comprises 312 residues: Ribosomal RNA small subunit methyltransferase H (312 aa).

S-adenosyl-L-methionine is bound by residues Gly-30–His-32, Asp-50, Phe-80, Asp-98, and Gln-105.

This sequence belongs to the methyltransferase superfamily. RsmH family.

It localises to the cytoplasm. The catalysed reaction is cytidine(1402) in 16S rRNA + S-adenosyl-L-methionine = N(4)-methylcytidine(1402) in 16S rRNA + S-adenosyl-L-homocysteine + H(+). In terms of biological role, specifically methylates the N4 position of cytidine in position 1402 (C1402) of 16S rRNA. In Lawsonia intracellularis (strain PHE/MN1-00), this protein is Ribosomal RNA small subunit methyltransferase H.